The sequence spans 141 residues: Nucleoside diphosphate kinase (141 aa).

Lysine 11, phenylalanine 59, arginine 87, threonine 93, arginine 104, and asparagine 114 together coordinate ATP. Residue histidine 117 is the Pros-phosphohistidine intermediate of the active site.

This sequence belongs to the NDK family. As to quaternary structure, homotetramer. Requires Mg(2+) as cofactor.

Its subcellular location is the cytoplasm. It carries out the reaction a 2'-deoxyribonucleoside 5'-diphosphate + ATP = a 2'-deoxyribonucleoside 5'-triphosphate + ADP. The catalysed reaction is a ribonucleoside 5'-diphosphate + ATP = a ribonucleoside 5'-triphosphate + ADP. Its function is as follows. Major role in the synthesis of nucleoside triphosphates other than ATP. The ATP gamma phosphate is transferred to the NDP beta phosphate via a ping-pong mechanism, using a phosphorylated active-site intermediate. The sequence is that of Nucleoside diphosphate kinase from Acidovorax sp. (strain JS42).